A 378-amino-acid polypeptide reads, in one-letter code: Putative glutamate--cysteine ligase 2-1 (378 aa).

Belongs to the glutamate--cysteine ligase type 2 family. YbdK subfamily.

It catalyses the reaction L-cysteine + L-glutamate + ATP = gamma-L-glutamyl-L-cysteine + ADP + phosphate + H(+). Functionally, ATP-dependent carboxylate-amine ligase which exhibits weak glutamate--cysteine ligase activity. This chain is Putative glutamate--cysteine ligase 2-1, found in Corynebacterium efficiens (strain DSM 44549 / YS-314 / AJ 12310 / JCM 11189 / NBRC 100395).